The sequence spans 233 residues: Uridylate kinase (233 aa).

G9–S10 is a binding site for ATP. Residue G43 participates in UMP binding. ATP contacts are provided by G44 and R48. UMP is bound by residues D65 and V113 to T119. Residues T139, Y145, and D148 each coordinate ATP.

Belongs to the UMP kinase family. In terms of assembly, homohexamer.

The protein resides in the cytoplasm. The enzyme catalyses UMP + ATP = UDP + ADP. The protein operates within pyrimidine metabolism; CTP biosynthesis via de novo pathway; UDP from UMP (UMPK route): step 1/1. With respect to regulation, inhibited by UTP. Its function is as follows. Catalyzes the reversible phosphorylation of UMP to UDP. This Methanosarcina mazei (strain ATCC BAA-159 / DSM 3647 / Goe1 / Go1 / JCM 11833 / OCM 88) (Methanosarcina frisia) protein is Uridylate kinase.